Consider the following 361-residue polypeptide: 3-dehydroquinate synthase (361 aa).

The protein belongs to the archaeal-type DHQ synthase family.

The enzyme catalyses 2-amino-2,3,7-trideoxy-D-lyxo-hept-6-ulosonate + NAD(+) + H2O = 3-dehydroquinate + NH4(+) + NADH + H(+). Its function is as follows. Catalyzes the oxidative deamination and cyclization of 2-amino-3,7-dideoxy-D-threo-hept-6-ulosonic acid (ADH) to yield 3-dehydroquinate (DHQ), which is fed into the canonical shikimic pathway of aromatic amino acid biosynthesis. The sequence is that of 3-dehydroquinate synthase from Methanococcus vannielii (strain ATCC 35089 / DSM 1224 / JCM 13029 / OCM 148 / SB).